The following is a 283-amino-acid chain: MADTHSNNNHVPVLFSFSVFSRASSVPVGSGYEVLIQKFLSIYGSQIDVHRKLVLQYFSEEWGQYIDLPKGFTVSEKCRLRLVPLQMDITTLGNLSPATSVFFCCDMQERFRPAIKYFGDIISVGQRLLQGARILGIPVVVSEQYPKGLGSTVQEMDLTGAKLVFPKTKFSMVIPELEAALAEIPGVRSVVLFGVETHVCIQQTALDLIGRGFEVHIVADATSSRSMMDRMFALERLARTGIIITTSESVLLQLVADKEHPKFKEIQNIIKVSAPESGLLSKV.

Belongs to the isochorismatase family.

The protein is Isochorismatase domain-containing protein 1 (isoc1) of Danio rerio (Zebrafish).